We begin with the raw amino-acid sequence, 294 residues long: Mitochondrial HMG-box protein CIM1 (294 aa).

Residues 1–90 (MKATLLLKAQ…RLYYASFCQS (90 aa)) constitute a mitochondrion transit peptide. The tract at residues 27–102 (NRTPYTAFQY…IDILNVSKIE (76 aa)) is HMG-box A. The tract at residues 110 to 258 (PIPAMSEYLL…IQILQKNMDI (149 aa)) is HMG-box B.

The protein localises to the mitochondrion matrix. Its function is as follows. Mitochondrial HMG-box protein that limits the copy number of mitochondrial DNA (mtDNA), antagonizing HMG-box containing protein ABF2, a mtDNA packaging factor. This chain is Mitochondrial HMG-box protein CIM1, found in Saccharomyces cerevisiae (strain ATCC 204508 / S288c) (Baker's yeast).